The sequence spans 142 residues: Secreted acidic protein 1B (142 aa).

2 stretches are compositionally biased toward acidic residues: residues 1 to 47 (SDDE…DDNE) and 54 to 64 (TNDDVDYGDGN). Positions 1-74 (SDDESGDDEN…DEAREIGDHS (74 aa)) are disordered. Topologically, residues 1 to 123 (SDDESGDDEN…YLRSGGSHFK (123 aa)) are extracellular. Over residues 65 to 74 (DEAREIGDHS) the composition is skewed to basic and acidic residues. A helical membrane pass occupies residues 124 to 141 (GQLLNITLGLGFCILFLL). Leu142 is a topological domain (cytoplasmic).

In terms of tissue distribution, component of the acid-insoluble and acid-soluble organic matrix of the aragonitic skeleton (at protein level).

The protein resides in the membrane. In Acropora millepora (Staghorn coral), this protein is Secreted acidic protein 1B.